A 556-amino-acid polypeptide reads, in one-letter code: MNHNEALTKQVYTFASELYAYGVREVVISPGSRSTPLAIAFEAHPNIKTWIHPDERSAAFFALGLIKGSERPVAILCTSGTAAANYTPAIAESQISRIPLIVLTSDRPHELRSVGAPQAINQVNMFANYVNFQFDMPVADGTDYMLDAIYYQMQIASQYLYGPHRGPIHFNLPFREPLTPNLERQEWLTSYSKKLPHYQKNINVQDIRHILKEKKGLIIVGDMQHQAIDQILTYATVHDIPILADPLSQLRKYNHPNVITTYDLYYRAGLDIDVDFVIRVGKPVISKKLNQWLKRTNAYQILVQNNDKIDVFPTPPSISYEISANDFFRNLIEEAAVDRKDWINMWRTLESQARNTIDKHMTNATDEAAFVKILIDKLTKDDAIFVSNSMPVRDIDNLLYNSEVEVYANRGANGIDGVVSTAIGMAVHKKITLIIGDLAFYHDMNGLLMAKINNINLNIVLLNNDGGGIFSYLPQKASAEAYFERLFGTPTGLNFEYTALLYDFTFKRFNTVADFTQEKLSHVNSHIYEMVTNRDDNMSQHQILYKKLSGILNVTL.

It belongs to the TPP enzyme family. MenD subfamily. As to quaternary structure, homodimer. Requires Mg(2+) as cofactor. It depends on Mn(2+) as a cofactor. The cofactor is thiamine diphosphate.

The enzyme catalyses isochorismate + 2-oxoglutarate + H(+) = 5-enolpyruvoyl-6-hydroxy-2-succinyl-cyclohex-3-ene-1-carboxylate + CO2. Its pathway is quinol/quinone metabolism; 1,4-dihydroxy-2-naphthoate biosynthesis; 1,4-dihydroxy-2-naphthoate from chorismate: step 2/7. The protein operates within quinol/quinone metabolism; menaquinone biosynthesis. Catalyzes the thiamine diphosphate-dependent decarboxylation of 2-oxoglutarate and the subsequent addition of the resulting succinic semialdehyde-thiamine pyrophosphate anion to isochorismate to yield 2-succinyl-5-enolpyruvyl-6-hydroxy-3-cyclohexene-1-carboxylate (SEPHCHC). The sequence is that of 2-succinyl-5-enolpyruvyl-6-hydroxy-3-cyclohexene-1-carboxylate synthase from Staphylococcus haemolyticus (strain JCSC1435).